Reading from the N-terminus, the 221-residue chain is 7-cyano-7-deazaguanine synthase (221 aa).

Position 7 to 17 (7 to 17) interacts with ATP; that stretch reads LSGGMDSTTLL. Zn(2+) is bound by residues Cys183, Cys191, Cys194, and Cys197.

This sequence belongs to the QueC family. As to quaternary structure, homodimer. Requires Zn(2+) as cofactor.

The catalysed reaction is 7-carboxy-7-deazaguanine + NH4(+) + ATP = 7-cyano-7-deazaguanine + ADP + phosphate + H2O + H(+). It participates in purine metabolism; 7-cyano-7-deazaguanine biosynthesis. Functionally, catalyzes the ATP-dependent conversion of 7-carboxy-7-deazaguanine (CDG) to 7-cyano-7-deazaguanine (preQ(0)). The chain is 7-cyano-7-deazaguanine synthase from Caldicellulosiruptor bescii (strain ATCC BAA-1888 / DSM 6725 / KCTC 15123 / Z-1320) (Anaerocellum thermophilum).